Consider the following 190-residue polypeptide: Elongation factor P (190 aa).

The protein belongs to the elongation factor P family.

It is found in the cytoplasm. Its pathway is protein biosynthesis; polypeptide chain elongation. Its function is as follows. Involved in peptide bond synthesis. Stimulates efficient translation and peptide-bond synthesis on native or reconstituted 70S ribosomes in vitro. Probably functions indirectly by altering the affinity of the ribosome for aminoacyl-tRNA, thus increasing their reactivity as acceptors for peptidyl transferase. The protein is Elongation factor P of Hyphomonas neptunium (strain ATCC 15444).